Reading from the N-terminus, the 416-residue chain is Squalene synthase (416 aa).

The next 2 membrane-spanning stretches (helical) occupy residues 285–304 (VINF…NACY) and 386–406 (FISY…FLIA).

Belongs to the phytoene/squalene synthase family. Requires Mg(2+) as cofactor.

It is found in the endoplasmic reticulum membrane. It catalyses the reaction 2 (2E,6E)-farnesyl diphosphate + NADPH + H(+) = squalene + 2 diphosphate + NADP(+). The catalysed reaction is 2 (2E,6E)-farnesyl diphosphate + NADH + H(+) = squalene + 2 diphosphate + NAD(+). Its pathway is terpene metabolism; lanosterol biosynthesis; lanosterol from farnesyl diphosphate: step 1/3. The polypeptide is Squalene synthase (fdfT) (Dictyostelium discoideum (Social amoeba)).